Consider the following 286-residue polypeptide: Elongation factor Ts (286 aa).

Residues 82 to 85 (TDFV) form an involved in Mg(2+) ion dislocation from EF-Tu region.

The protein belongs to the EF-Ts family.

The protein localises to the cytoplasm. Functionally, associates with the EF-Tu.GDP complex and induces the exchange of GDP to GTP. It remains bound to the aminoacyl-tRNA.EF-Tu.GTP complex up to the GTP hydrolysis stage on the ribosome. This Desulfovibrio desulfuricans (strain ATCC 27774 / DSM 6949 / MB) protein is Elongation factor Ts.